Here is an 810-residue protein sequence, read N- to C-terminus: S-adenosyl-L-methionine-dependent tRNA 4-demethylwyosine synthase (810 aa).

2 disordered regions span residues 86–116 (NGGG…KGGC) and 156–176 (RSST…VGKK). The segment covering 104–116 (GCCSSKGGKKGGC) has biased composition (low complexity). Over residues 159–172 (TPKVFSKNSSSNSR) the composition is skewed to polar residues. One can recognise a Flavodoxin-like domain in the interval 205 to 360 (IYVLYSSLQG…KIDEWTSLLA (156 aa)). FMN-binding positions include 211-215 (SLQGA) and 304-337 (VLGL…RRIF). Acidic residues predominate over residues 374 to 397 (DENADSEEDEEEGNGSDELGDVED). The tract at residues 374–407 (DENADSEEDEEEGNGSDELGDVEDIGGKGSNGKF) is disordered. A Radical SAM core domain is found at 463 to 713 (FNIASSRCME…ELQRRGLHYD (251 aa)). [4Fe-4S] cluster contacts are provided by Cys479, Cys483, and Cys486. Residue Lys496 forms a Glycyl lysine isopeptide (Lys-Gly) (interchain with G-Cter in ubiquitin) linkage. A disordered region spans residues 782–810 (RVYRKDKKKQNKENQETTTRETPLPPIPA).

The protein belongs to the TYW1 family. It depends on [4Fe-4S] cluster as a cofactor.

The protein resides in the endoplasmic reticulum. The enzyme catalyses N(1)-methylguanosine(37) in tRNA(Phe) + pyruvate + S-adenosyl-L-methionine = 4-demethylwyosine(37) in tRNA(Phe) + 5'-deoxyadenosine + L-methionine + CO2 + H2O. The protein operates within tRNA modification; wybutosine-tRNA(Phe) biosynthesis. In terms of biological role, component of the wybutosine biosynthesis pathway. Wybutosine is a hyper modified guanosine with a tricyclic base found at the 3'-position adjacent to the anticodon of eukaryotic phenylalanine tRNA. Catalyzes the condensation of N-methylguanine with 2 carbon atoms from pyruvate to form the tricyclic 4-demethylwyosine, an intermediate in wybutosine biosynthesis. In Saccharomyces cerevisiae (strain ATCC 204508 / S288c) (Baker's yeast), this protein is S-adenosyl-L-methionine-dependent tRNA 4-demethylwyosine synthase (TYW1).